Reading from the N-terminus, the 685-residue chain is Coiled-coil domain-containing protein 8 homolog (685 aa).

Residues 93 to 127 (VGTYDSSNGSDSELSDFDTSKVKGNRSSSGRTRKV) form a disordered region. Phosphoserine occurs at positions 142 and 146. Disordered regions lie at residues 207–263 (QRVK…GTRR), 281–538 (VPPF…KAEA), 558–579 (QRAE…TGAT), and 599–623 (REEA…KQVK). A compositionally biased stretch (polar residues) spans 219–228 (EVGQTQQAST). Positions 246-256 (DSSRNTGDRSD) are enriched in basic and acidic residues. Low complexity-rich tracts occupy residues 299-329 (AENQ…PRAE), 337-353 (EAVA…PRAE), 361-401 (EAAA…PRAE), and 409-420 (EAAASPIAEAAA). The span at 425–440 (ELVDSPRAETAADPRA) shows a compositional bias: basic and acidic residues. Residues 458 to 468 (AAASPIAEAAA) are compositionally biased toward low complexity. The span at 473-488 (ELVDSPRAETAADPRA) shows a compositional bias: basic and acidic residues. Over residues 505-519 (EVAASPRAEAAASPR) the composition is skewed to low complexity. A compositionally biased stretch (basic and acidic residues) spans 558-567 (QRAEAIDSQR). Residues 611-622 (SAGSGSRAQKQV) show a composition bias toward polar residues. Residues 647–653 (PRLPTLP) carry the PxLPxI/L motif; mediates interaction with ANKRA2 motif.

Component of the 3M complex, composed of core components CUL7, CCDC8 and OBSL1. Interacts (via PxLPxI/L motif) with ANKRA2 (via ankyrin repeats); may link the 3M complex to histone deacetylases including HDAC4 and HDAC5.

The protein localises to the cytoplasm. Its subcellular location is the cytoskeleton. It localises to the microtubule organizing center. It is found in the centrosome. Its function is as follows. Core component of the 3M complex, a complex required to regulate microtubule dynamics and genome integrity. It is unclear how the 3M complex regulates microtubules, it could act by controlling the level of a microtubule stabilizer. Required for localization of CUL7 to the centrosome. This Mus musculus (Mouse) protein is Coiled-coil domain-containing protein 8 homolog (Ccdc8).